Reading from the N-terminus, the 551-residue chain is Probable NADH-ubiquinone oxidoreductase C3A11.07, mitochondrial (551 aa).

The transit peptide at 1-37 (MLFSRSILRGMPKAGIPKSPLALSASRNLRLANSVRF) directs the protein to the mitochondrion. 93-123 (TLVVLGAGWGATSILRTIDTSLFNVIVVSPR) is a binding site for FAD. 255–291 (VHTVVVGGGPTGMEFAGEMADFIEDDLKSWYPELADD) contributes to the NAD(+) binding site.

The protein belongs to the NADH dehydrogenase family.

It localises to the mitochondrion. It carries out the reaction a quinone + NADH + H(+) = a quinol + NAD(+). The enzyme catalyses a ubiquinone + NADH + H(+) = a ubiquinol + NAD(+). Catalyzes the oxidation of NADH. The chain is Probable NADH-ubiquinone oxidoreductase C3A11.07, mitochondrial from Schizosaccharomyces pombe (strain 972 / ATCC 24843) (Fission yeast).